The primary structure comprises 164 residues: Endoribonuclease YbeY (164 aa).

Zn(2+) contacts are provided by histidine 130, histidine 134, and histidine 140.

This sequence belongs to the endoribonuclease YbeY family. The cofactor is Zn(2+).

The protein resides in the cytoplasm. Functionally, single strand-specific metallo-endoribonuclease involved in late-stage 70S ribosome quality control and in maturation of the 3' terminus of the 16S rRNA. The chain is Endoribonuclease YbeY from Streptococcus mutans serotype c (strain ATCC 700610 / UA159).